A 376-amino-acid polypeptide reads, in one-letter code: Peroxisomal membrane protein PEX14 (376 aa).

The span at 1–12 (MASSEQAEQPNQ) shows a compositional bias: polar residues. The segment at 1-24 (MASSEQAEQPNQPSSPPGSENVVP) is disordered. Ala-2 is modified (N-acetylalanine). Over 2–108 (ASSEQAEQPN…YSPRGSRWRD (107 aa)) the chain is Peroxisomal. N6-acetyllysine is present on Lys-34. The interval 70 to 102 (SGTAADEPSPLGPATPVVPVQPPHLTPQPYSPR) is disordered. Residues 88–99 (PVQPPHLTPQPY) are compositionally biased toward pro residues. The helical transmembrane segment at 109–127 (YGALAIIMAGIAFGFHQLY) threads the bilayer. Over 128 to 376 (KRYLLPLILG…EGASNETERD (249 aa)) the chain is Cytoplasmic. The disordered stretch occupies residues 230-376 (PPSPSAPKIP…EGASNETERD (147 aa)). A Phosphoserine modification is found at Ser-232. Composition is skewed to low complexity over residues 247-259 (SSSP…VNHH) and 265-275 (SPVSNESTSSS). Residues Ser-282 and Ser-334 each carry the phosphoserine modification. Residues 323–341 (KEDEDDEDDDVSHVDEEDV) show a composition bias toward acidic residues. Residues 359 to 376 (QVEKLRRPEGASNETERD) are compositionally biased toward basic and acidic residues.

It belongs to the peroxin-14 family. Interacts with PEX13; forming the PEX13-PEX14 docking complex. Interacts with PEX5 (via WxxxF/Y motifs). Interacts with PEX19. Interacts with tubulin.

It is found in the peroxisome membrane. Component of the PEX13-PEX14 docking complex, a translocon channel that specifically mediates the import of peroxisomal cargo proteins bound to PEX5 receptor. The PEX13-PEX14 docking complex forms a large import pore which can be opened to a diameter of about 9 nm. Mechanistically, PEX5 receptor along with cargo proteins associates with the PEX14 subunit of the PEX13-PEX14 docking complex in the cytosol, leading to the insertion of the receptor into the organelle membrane with the concomitant translocation of the cargo into the peroxisome matrix. Plays a key role for peroxisome movement through a direct interaction with tubulin. The chain is Peroxisomal membrane protein PEX14 from Mus musculus (Mouse).